We begin with the raw amino-acid sequence, 332 residues long: Probable sugar phosphate/phosphate translocator At1g53660 (332 aa).

A run of 10 helical transmembrane segments spans residues 19-39, 46-66, 82-102, 120-140, 143-163, 165-185, 199-219, 233-253, 259-281, and 285-304; these read ASIL…KWVL, FPYP…LCFL, LEIY…TLWL, AIMP…IMSC, LLIM…ELNI, WVGV…LILM, LSLM…PWIF, LVLS…FLVI, LTIR…LLFA, and LTII…ATYN. The span at 312–322 shows a compositional bias: polar residues; sequence ESITLVSQSPK. The segment at 312-332 is disordered; that stretch reads ESITLVSQSPKNSDKKPDGPL. The segment covering 323 to 332 has biased composition (basic and acidic residues); that stretch reads NSDKKPDGPL.

It belongs to the TPT transporter family. TPT (TC 2.A.7.9) subfamily.

Its subcellular location is the membrane. The sequence is that of Probable sugar phosphate/phosphate translocator At1g53660 from Arabidopsis thaliana (Mouse-ear cress).